Consider the following 101-residue polypeptide: MIPGELFPAEGELILNQGRAVTRLMVANTGDRPVQVGSHYHFAETNPALEFDRGAARGMRLDIAAGTAVRFEPGQRREVVLIPIGGARRIYGFNQQVMGEL.

The protein belongs to the urease beta subunit family. In terms of assembly, heterotrimer of UreA (gamma), UreB (beta) and UreC (alpha) subunits. Three heterotrimers associate to form the active enzyme.

It is found in the cytoplasm. It catalyses the reaction urea + 2 H2O + H(+) = hydrogencarbonate + 2 NH4(+). Its pathway is nitrogen metabolism; urea degradation; CO(2) and NH(3) from urea (urease route): step 1/1. The polypeptide is Urease subunit beta (Ruegeria pomeroyi (strain ATCC 700808 / DSM 15171 / DSS-3) (Silicibacter pomeroyi)).